The following is a 344-amino-acid chain: D-amino-acid oxidase (344 aa).

FAD is bound by residues alanine 11, serine 14, serine 49, glycine 53, asparagine 55, and isoleucine 167. The (R)-lactate site is built by tyrosine 229 and arginine 290. Anthranilate-binding residues include tyrosine 229 and arginine 290. Residues arginine 290, serine 321, glycine 324, tyrosine 325, and glutamine 326 each coordinate FAD.

Belongs to the DAMOX/DASOX family. FAD serves as cofactor.

The protein localises to the peroxisome. It catalyses the reaction a D-alpha-amino acid + O2 + H2O = a 2-oxocarboxylate + H2O2 + NH4(+). The enzyme catalyses D-alanine + O2 + H2O = pyruvate + H2O2 + NH4(+). Catalyzes the oxidative deamination of D-amino acids with broad substrate specificity. Enables the organism to utilize D-amino acids as a source of nutrients. Enables the organism to utilize D-alanine as a source of nitrogen. The polypeptide is D-amino-acid oxidase (Komagataella phaffii (strain GS115 / ATCC 20864) (Yeast)).